The following is a 453-amino-acid chain: Exopolyphosphatase PRUNE1 (453 aa).

An N-acetylmethionine modification is found at Met-1. Residues Asp-28, Asp-30, Asp-106, and Asp-179 each contribute to the Mn(2+) site. The short motif at 106-108 (DHH) is the DHH motif element. Residues 393–420 (SLLSGLSQDEEEPPLPPTPMNSLVDECP) form an essential for homodimerization region. The segment at 396-419 (SGLSQDEEEPPLPPTPMNSLVDEC) is disordered. At Ser-399 the chain carries Phosphoserine. Thr-410 is subject to Phosphothreonine. Ser-414 carries the post-translational modification Phosphoserine.

The protein belongs to the PPase class C family. Prune subfamily. As to quaternary structure, homooligomer. Able to homodimerize via its C-terminal domain. Interacts with NME1. Interacts with GSK3; at focal adhesion complexes where paxillin and vinculin are colocalized. Mn(2+) serves as cofactor.

The protein localises to the cytoplasm. The protein resides in the nucleus. Its subcellular location is the cell junction. It is found in the focal adhesion. It carries out the reaction diphosphate + H2O = 2 phosphate + H(+). With respect to regulation, activated by magnesium ions and inhibited by manganese ions. Inhibited by dipyridamole, moderately sensitive to IBMX and inhibited by vinpocetine. In terms of biological role, phosphodiesterase (PDE) that has higher activity toward cAMP than cGMP, as substrate. Plays a role in cell proliferation, is able to induce cell motility and acts as a negative regulator of NME1. This Bos taurus (Bovine) protein is Exopolyphosphatase PRUNE1 (PRUNE1).